The following is a 622-amino-acid chain: Chaperone protein HscA homolog (622 aa).

It belongs to the heat shock protein 70 family.

In terms of biological role, chaperone involved in the maturation of iron-sulfur cluster-containing proteins. Has a low intrinsic ATPase activity which is markedly stimulated by HscB. The sequence is that of Chaperone protein HscA homolog from Azoarcus sp. (strain BH72).